Consider the following 466-residue polypeptide: Ras-GEF domain-containing family member 1C (466 aa).

Disordered stretches follow at residues 1–35 and 443–466; these read MPRTLTASDMVTPGSLSPPPTESTEGEQAGQPLLD and SESPESQTEKERWKSLRSSILGKT. Residues 34–164 form the N-terminal Ras-GEF domain; the sequence is LDGAPSSASL…LLQTLHQKLA (131 aa). Residues 200–446 form the Ras-GEF domain; that stretch reads DPYTLAQQLT…YLASYESESP (247 aa).

Functionally, guanine nucleotide exchange factor (GEF). This is Ras-GEF domain-containing family member 1C (Rasgef1c) from Mus musculus (Mouse).